The primary structure comprises 177 residues: Negative modulator of initiation of replication (177 aa).

This sequence belongs to the SeqA family. As to quaternary structure, homodimer. Polymerizes to form helical filaments.

The protein resides in the cytoplasm. Its function is as follows. Negative regulator of replication initiation, which contributes to regulation of DNA replication and ensures that replication initiation occurs exactly once per chromosome per cell cycle. Binds to pairs of hemimethylated GATC sequences in the oriC region, thus preventing assembly of replication proteins and re-initiation at newly replicated origins. Repression is relieved when the region becomes fully methylated. The polypeptide is Negative modulator of initiation of replication (Vibrio cholerae serotype O1 (strain ATCC 39315 / El Tor Inaba N16961)).